Reading from the N-terminus, the 376-residue chain is Probable inactive protein kinase At3g63330 (376 aa).

Residues 1–370 (MVERGPTVYL…VDEALQHPYF (370 aa)) form the Protein kinase domain.

It belongs to the protein kinase superfamily. Ser/Thr protein kinase family.

The chain is Probable inactive protein kinase At3g63330 from Arabidopsis thaliana (Mouse-ear cress).